Consider the following 356-residue polypeptide: tRNA N6-adenosine threonylcarbamoyltransferase (356 aa).

2 residues coordinate Fe cation: histidine 115 and histidine 119. Substrate is bound by residues 138–142 (LVSGG), aspartate 171, glycine 184, and asparagine 283. Aspartate 311 is a binding site for Fe cation.

The protein belongs to the KAE1 / TsaD family. Fe(2+) serves as cofactor.

The protein resides in the cytoplasm. The enzyme catalyses L-threonylcarbamoyladenylate + adenosine(37) in tRNA = N(6)-L-threonylcarbamoyladenosine(37) in tRNA + AMP + H(+). Functionally, required for the formation of a threonylcarbamoyl group on adenosine at position 37 (t(6)A37) in tRNAs that read codons beginning with adenine. Is involved in the transfer of the threonylcarbamoyl moiety of threonylcarbamoyl-AMP (TC-AMP) to the N6 group of A37, together with TsaE and TsaB. TsaD likely plays a direct catalytic role in this reaction. The protein is tRNA N6-adenosine threonylcarbamoyltransferase of Prochlorococcus marinus (strain MIT 9312).